The chain runs to 161 residues: Cyclic pyranopterin monophosphate synthase (161 aa).

Residues 75–77 and 114–115 each bind substrate; these read MCH and ME. The active site involves Asp129.

The protein belongs to the MoaC family. As to quaternary structure, homohexamer; trimer of dimers.

It catalyses the reaction (8S)-3',8-cyclo-7,8-dihydroguanosine 5'-triphosphate = cyclic pyranopterin phosphate + diphosphate. It functions in the pathway cofactor biosynthesis; molybdopterin biosynthesis. In terms of biological role, catalyzes the conversion of (8S)-3',8-cyclo-7,8-dihydroguanosine 5'-triphosphate to cyclic pyranopterin monophosphate (cPMP). This is Cyclic pyranopterin monophosphate synthase from Staphylococcus carnosus (strain TM300).